Reading from the N-terminus, the 477-residue chain is NADH-quinone oxidoreductase subunit N (477 aa).

The next 13 membrane-spanning stretches (helical) occupy residues 7–27 (VLAHALPELILAGGVLLLILI), 37–57 (GPMTELAVGLLGIAILTLVLG), 77–97 (FMKVLVLIGSLVSLIMGQTYL), 109–129 (ILILLSTLGMLMLISATGLIA), 162–182 (FVLGALSSGMLLYGASLIYGF), 201–221 (LGVVFGLVFLTAGLAFKMSTV), 233–253 (GAPTPVTAFFASAPKLAAIAI), 272–292 (IIVFISILSMALGSFAAIGQT), 297–317 (LMAYSSIGHMGFALVGLAAGT), 323–343 (GVLAYMAIYLVMTLGTFAAIL), 369–389 (AFFLAIMMFSLAGIPPLAGFF), 402–424 (HLYPLAVIGVLCSTVGAYYYLRI), and 446–466 (AVLIVTGLAVLLLCVYPGSFV).

It belongs to the complex I subunit 2 family. In terms of assembly, NDH-1 is composed of 14 different subunits. Subunits NuoA, H, J, K, L, M, N constitute the membrane sector of the complex.

It is found in the cell inner membrane. The catalysed reaction is a quinone + NADH + 5 H(+)(in) = a quinol + NAD(+) + 4 H(+)(out). NDH-1 shuttles electrons from NADH, via FMN and iron-sulfur (Fe-S) centers, to quinones in the respiratory chain. The immediate electron acceptor for the enzyme in this species is believed to be ubiquinone. Couples the redox reaction to proton translocation (for every two electrons transferred, four hydrogen ions are translocated across the cytoplasmic membrane), and thus conserves the redox energy in a proton gradient. The sequence is that of NADH-quinone oxidoreductase subunit N from Beijerinckia indica subsp. indica (strain ATCC 9039 / DSM 1715 / NCIMB 8712).